The sequence spans 72 residues: ATP synthase subunit L (72 aa).

As to quaternary structure, F-type ATP synthases have 2 components, the catalytic core F(1) and the membrane-embedded component F(0), linked together by a central stalk and a peripheral stalk. The central stalk, also called rotor shaft, is often seen as part of F(1). The peripheral stalk is seen as part of F(0). F(0) contains the membrane channel next to the rotor. F-type ATP synthases form dimers but each monomer functions independently in ATP generation. The dimer consists of 18 different polypeptides: ATP1 (subunit alpha, part of F(1), 3 molecules per monomer), ATP2 (subunit beta, part of F(1), 3 molecules per monomer), ATP3 (subunit gamma, part of the central stalk), ATP4 (subunit b, part of the peripheral stalk), ATP5/OSCP (subunit 5/OSCP, part of the peripheral stalk), ATP6 (subunit a, part of the peripheral stalk), ATP7 (subunit d, part of the peripheral stalk), ATP8 (subunit 8, part of the peripheral stalk), OLI1 (subunit c, part of the rotor, 10 molecules per monomer), ATP14 (subunit h, part of the peripheral stalk), ATP15 (subunit epsilon, part of the central stalk), ATP16 (subunit delta, part of the central stalk), ATP17 (subunit f, part of the peripheral stalk), ATP18 (subunit i/j, part of the peripheral stalk). Dimer-specific subunits are ATP19 (subunit k, at interface between monomers), ATP20 (subunit g, at interface between monomers), TIM11 (subunit e, at interface between monomers). Also contains subunit L.

It is found in the mitochondrion inner membrane. In terms of biological role, mitochondrial membrane ATP synthase (F(1)F(0) ATP synthase or Complex V) produces ATP from ADP in the presence of a proton gradient across the membrane which is generated by electron transport complexes of the respiratory chain. F-type ATP synthases consist of two structural domains, F(1) - containing the extramembraneous catalytic core, and F(0) - containing the membrane proton channel, linked together by a central stalk and a peripheral stalk. During catalysis, ATP synthesis in the catalytic domain of F(1) is coupled via a rotary mechanism of the central stalk subunits to proton translocation. In Pichia angusta (Yeast), this protein is ATP synthase subunit L.